Reading from the N-terminus, the 622-residue chain is FERM domain-containing protein 6 (622 aa).

One can recognise an FERM domain in the interval 16–328; sequence RRVCIFLPND…NSHRLYMNLQ (313 aa). The segment at 357–452 is disordered; the sequence is LDMDPLEKRS…KDRLEEDSQD (96 aa). Composition is skewed to low complexity over residues 384-395 and 425-438; these read HSTASHSSSHTS and SSMT…TSGV. Ser-522 is subject to Phosphoserine. Thr-523 carries the phosphothreonine modification. A phosphoserine mark is found at Ser-525, Ser-542, and Ser-544.

The protein localises to the cytoplasm. The protein resides in the cell membrane. The protein is FERM domain-containing protein 6 (Frmd6) of Mus musculus (Mouse).